Reading from the N-terminus, the 306-residue chain is Ribonuclease Z (306 aa).

Zn(2+) contacts are provided by His63, His65, Asp67, His68, His141, Asp211, and His269. Catalysis depends on Asp67, which acts as the Proton acceptor.

This sequence belongs to the RNase Z family. In terms of assembly, homodimer. Zn(2+) is required as a cofactor.

The enzyme catalyses Endonucleolytic cleavage of RNA, removing extra 3' nucleotides from tRNA precursor, generating 3' termini of tRNAs. A 3'-hydroxy group is left at the tRNA terminus and a 5'-phosphoryl group is left at the trailer molecule.. Functionally, zinc phosphodiesterase, which displays some tRNA 3'-processing endonuclease activity. Probably involved in tRNA maturation, by removing a 3'-trailer from precursor tRNA. In Staphylococcus haemolyticus (strain JCSC1435), this protein is Ribonuclease Z.